Consider the following 338-residue polypeptide: GTPase Obg (338 aa).

Residues Met1–Leu159 enclose the Obg domain. In terms of domain architecture, OBG-type G spans Ala160–Trp331. GTP is bound by residues Gly166 to Ser173, Phe191 to Lys195, Asp213 to Gly216, Asn283 to Asp286, and Ser312 to Ala314. Mg(2+) contacts are provided by Ser173 and Thr193.

This sequence belongs to the TRAFAC class OBG-HflX-like GTPase superfamily. OBG GTPase family. In terms of assembly, monomer. Requires Mg(2+) as cofactor.

It is found in the cytoplasm. An essential GTPase which binds GTP, GDP and possibly (p)ppGpp with moderate affinity, with high nucleotide exchange rates and a fairly low GTP hydrolysis rate. Plays a role in control of the cell cycle, stress response, ribosome biogenesis and in those bacteria that undergo differentiation, in morphogenesis control. This chain is GTPase Obg, found in Geobacter sulfurreducens (strain ATCC 51573 / DSM 12127 / PCA).